Reading from the N-terminus, the 210-residue chain is Redox-sensing transcriptional repressor Rex (210 aa).

Positions 17–56 (KYHRYLGNLMRNDVDRISSKELSEKIGFTASQIRQDLNCF) form a DNA-binding region, H-T-H motif. 91–96 (GAGNIG) contributes to the NAD(+) binding site.

It belongs to the transcriptional regulatory Rex family. Homodimer.

The protein resides in the cytoplasm. Its function is as follows. Modulates transcription in response to changes in cellular NADH/NAD(+) redox state. The polypeptide is Redox-sensing transcriptional repressor Rex (Clostridium kluyveri (strain ATCC 8527 / DSM 555 / NBRC 12016 / NCIMB 10680 / K1)).